The chain runs to 176 residues: uncharacterized protein (176 aa).

This is an uncharacterized protein from Treponema pallidum (strain Nichols).